A 413-amino-acid polypeptide reads, in one-letter code: Cell division protein FtsZ 2 (413 aa).

GTP-binding positions include 132 to 134, glutamate 171, arginine 175, and aspartate 218; that span reads GTG.

Belongs to the FtsZ family. Homodimer. Polymerizes to form a dynamic ring structure in a strictly GTP-dependent manner. Interacts directly with several other division proteins.

The protein localises to the cytoplasm. In terms of biological role, essential cell division protein that forms a contractile ring structure (Z ring) at the future cell division site. The regulation of the ring assembly controls the timing and the location of cell division. One of the functions of the FtsZ ring is to recruit other cell division proteins to the septum to produce a new cell wall between the dividing cells. Binds GTP and shows GTPase activity. The polypeptide is Cell division protein FtsZ 2 (Thermococcus kodakarensis (strain ATCC BAA-918 / JCM 12380 / KOD1) (Pyrococcus kodakaraensis (strain KOD1))).